The primary structure comprises 98 residues: NADH-ubiquinone oxidoreductase chain 4L (98 aa).

Transmembrane regions (helical) follow at residues 2 to 22 (PFIY…LLLF), 30 to 50 (LLCL…TTLG), and 61 to 81 (IILM…LVTI).

Belongs to the complex I subunit 4L family. As to quaternary structure, core subunit of respiratory chain NADH dehydrogenase (Complex I) which is composed of 45 different subunits.

It localises to the mitochondrion inner membrane. It carries out the reaction a ubiquinone + NADH + 5 H(+)(in) = a ubiquinol + NAD(+) + 4 H(+)(out). Core subunit of the mitochondrial membrane respiratory chain NADH dehydrogenase (Complex I) which catalyzes electron transfer from NADH through the respiratory chain, using ubiquinone as an electron acceptor. Part of the enzyme membrane arm which is embedded in the lipid bilayer and involved in proton translocation. The sequence is that of NADH-ubiquinone oxidoreductase chain 4L (MT-ND4L) from Bradypus tridactylus (Pale-throated three-toed sloth).